The chain runs to 317 residues: Acetyl-coenzyme A carboxylase carboxyl transferase subunit alpha (317 aa).

One can recognise a CoA carboxyltransferase C-terminal domain in the interval 41-291; the sequence is KVDKLLRSTY…SMALDSALRD (251 aa).

It belongs to the AccA family. As to quaternary structure, acetyl-CoA carboxylase is a heterohexamer composed of biotin carboxyl carrier protein (AccB), biotin carboxylase (AccC) and two subunits each of ACCase subunit alpha (AccA) and ACCase subunit beta (AccD).

The protein resides in the cytoplasm. The catalysed reaction is N(6)-carboxybiotinyl-L-lysyl-[protein] + acetyl-CoA = N(6)-biotinyl-L-lysyl-[protein] + malonyl-CoA. It participates in lipid metabolism; malonyl-CoA biosynthesis; malonyl-CoA from acetyl-CoA: step 1/1. In terms of biological role, component of the acetyl coenzyme A carboxylase (ACC) complex. First, biotin carboxylase catalyzes the carboxylation of biotin on its carrier protein (BCCP) and then the CO(2) group is transferred by the carboxyltransferase to acetyl-CoA to form malonyl-CoA. The chain is Acetyl-coenzyme A carboxylase carboxyl transferase subunit alpha from Paramagnetospirillum magneticum (strain ATCC 700264 / AMB-1) (Magnetospirillum magneticum).